The sequence spans 299 residues: N-acetylmuramic acid 6-phosphate etherase (299 aa).

In terms of domain architecture, SIS spans 54 to 217; the sequence is TIAQYKKGGR…STITMVGVGK (164 aa). The active-site Proton donor is Glu82. Residue Glu113 is part of the active site.

Belongs to the GCKR-like family. MurNAc-6-P etherase subfamily. Homodimer.

The catalysed reaction is N-acetyl-D-muramate 6-phosphate + H2O = N-acetyl-D-glucosamine 6-phosphate + (R)-lactate. The protein operates within amino-sugar metabolism; N-acetylmuramate degradation. In terms of biological role, specifically catalyzes the cleavage of the D-lactyl ether substituent of MurNAc 6-phosphate, producing GlcNAc 6-phosphate and D-lactate. The chain is N-acetylmuramic acid 6-phosphate etherase from Staphylococcus aureus (strain USA300).